Here is a 248-residue protein sequence, read N- to C-terminus: Ubiquinone/menaquinone biosynthesis C-methyltransferase UbiE (248 aa).

Residues Ser-68, Asp-92, and 120–121 (NA) each bind S-adenosyl-L-methionine.

This sequence belongs to the class I-like SAM-binding methyltransferase superfamily. MenG/UbiE family.

The catalysed reaction is a 2-demethylmenaquinol + S-adenosyl-L-methionine = a menaquinol + S-adenosyl-L-homocysteine + H(+). It carries out the reaction a 2-methoxy-6-(all-trans-polyprenyl)benzene-1,4-diol + S-adenosyl-L-methionine = a 5-methoxy-2-methyl-3-(all-trans-polyprenyl)benzene-1,4-diol + S-adenosyl-L-homocysteine + H(+). It functions in the pathway quinol/quinone metabolism; menaquinone biosynthesis; menaquinol from 1,4-dihydroxy-2-naphthoate: step 2/2. It participates in cofactor biosynthesis; ubiquinone biosynthesis. In terms of biological role, methyltransferase required for the conversion of demethylmenaquinol (DMKH2) to menaquinol (MKH2) and the conversion of 2-polyprenyl-6-methoxy-1,4-benzoquinol (DDMQH2) to 2-polyprenyl-3-methyl-6-methoxy-1,4-benzoquinol (DMQH2). This chain is Ubiquinone/menaquinone biosynthesis C-methyltransferase UbiE, found in Rickettsia prowazekii (strain Madrid E).